Reading from the N-terminus, the 421-residue chain is Testin (421 aa).

In terms of domain architecture, PET spans 92–199 (MILTNPVAAK…GDVKLPCEMD (108 aa)). Positions 133-164 (EKQPVAGSEGAQYRKKQLAKQLPAHDQDPSKC) are disordered. Residues 155-164 (PAHDQDPSKC) are compositionally biased toward basic and acidic residues. 3 LIM zinc-binding domains span residues 234 to 297 (YSCY…CDSE), 299 to 359 (PRCA…NHAV), and 362 to 421 (QGCH…KMMS).

It belongs to the prickle / espinas / testin family. In terms of assembly, interacts via LIM domain 1 with ZYX. Interacts (via LIM domain 3) with ENAH and VASP. Interacts with ALKBH4, talin, actin, alpha-actinin, GRIP1 and PXN. Interacts (via LIM domain 2) with ACTL7A (via N-terminus). Heterodimer with ACTL7A; the heterodimer interacts with ENAH to form a heterotrimer.

It localises to the cytoplasm. Its subcellular location is the cell junction. It is found in the focal adhesion. Its function is as follows. Scaffold protein that may play a role in cell adhesion, cell spreading and in the reorganization of the actin cytoskeleton. Plays a role in the regulation of cell proliferation. May act as a tumor suppressor. In Saimiri boliviensis boliviensis (Bolivian squirrel monkey), this protein is Testin (TES).